The chain runs to 850 residues: Protein argonaute 8 (850 aa).

Positions 1-30 (MDTTLPPPQHMEREPLKSKSSLLPMTRRGN) are disordered. Positions 247–361 (PVVDFLIANQ…FPIELCELVS (115 aa)) constitute a PAZ domain. The region spanning 518 to 811 (QSILGEVPPK…AAAQMATAMK (294 aa)) is the Piwi domain.

The protein belongs to the argonaute family. Ago subfamily.

In terms of biological role, involved in RNA-mediated post-transcriptional gene silencing (PTGS). Main component of the RNA-induced silencing complex (RISC) that binds to a short guide RNA such as a microRNA (miRNA) or small interfering RNA (siRNA). RISC uses the mature miRNA or siRNA as a guide for slicer-directed cleavage of homologous mRNAs to repress gene expression. This chain is Protein argonaute 8 (AGO8), found in Arabidopsis thaliana (Mouse-ear cress).